A 204-amino-acid chain; its full sequence is Inactive ribonuclease-like protein 9 (204 aa).

Positions M1–L26 are cleaved as a signal peptide. Disulfide bonds link C97/C152, C115/C167, and C122/C129. N-linked (GlcNAc...) asparagine glycans are attached at residues N130 and N142.

The protein belongs to the pancreatic ribonuclease family.

Its subcellular location is the secreted. Functionally, does not exhibit any ribonuclease activity. This Chlorocebus pygerythrus (Vervet monkey) protein is Inactive ribonuclease-like protein 9 (RNASE9).